The chain runs to 334 residues: Formylmethanofuran--tetrahydromethanopterin formyltransferase (334 aa).

It belongs to the FTR family. As to quaternary structure, homotetramer.

Its subcellular location is the cytoplasm. It carries out the reaction N-formylmethanofuran + 5,6,7,8-tetrahydromethanopterin + H(+) = N(5)-formyl-5,6,7,8-tetrahydromethanopterin + methanofuran. The protein operates within one-carbon metabolism; formaldehyde degradation; formate from formaldehyde (H(4)MPT route): step 4/5. Its function is as follows. Catalyzes the transfer of a formyl group from 5-formyl tetrahydromethanopterin (5-formyl-H(4)MPT) to methanofuran (MFR) to produce formylmethanofuran (formyl-MFR) and tetrahydromethanopterin (H(4)MPT). The protein is Formylmethanofuran--tetrahydromethanopterin formyltransferase of Rhodopirellula baltica (strain DSM 10527 / NCIMB 13988 / SH1).